A 282-amino-acid polypeptide reads, in one-letter code: MTHWPSPAKLNLFLYITGQRADGYHTLQTLFQFLDYGDTLHIEPRHDGEIHLLTPVTGVENEDNLIVRAARLLMKAASESGRLPVGSGADISIEKRLPMGGGLGGGSSNAATVLVALNHLWQCGLSIDELATLGLTLGADVPVFVRGHAAFAEGVGEILTPVNPPEKWYLVAHPGVSIPTPVIFKDPQLPRNTPKRSIDTLLKCEFSNDCEVIARKRFREVDAALSWLLEYAPSRLTGTGACVFAEFDTESCARQVLEQAPEWLNAFVAKGVNLSPLHRELL.

Residue K9 is part of the active site. 98–108 (PMGGGLGGGSS) is an ATP binding site. The active site involves D140.

Belongs to the GHMP kinase family. IspE subfamily. As to quaternary structure, homodimer.

The catalysed reaction is 4-CDP-2-C-methyl-D-erythritol + ATP = 4-CDP-2-C-methyl-D-erythritol 2-phosphate + ADP + H(+). The protein operates within isoprenoid biosynthesis; isopentenyl diphosphate biosynthesis via DXP pathway; isopentenyl diphosphate from 1-deoxy-D-xylulose 5-phosphate: step 3/6. Its function is as follows. Catalyzes the phosphorylation of the position 2 hydroxy group of 4-diphosphocytidyl-2C-methyl-D-erythritol. In Salmonella schwarzengrund (strain CVM19633), this protein is 4-diphosphocytidyl-2-C-methyl-D-erythritol kinase.